A 546-amino-acid polypeptide reads, in one-letter code: 2-isopropylmalate synthase (546 aa).

The 264-residue stretch at 8–271 (ILIFDTTLRD…NKFFNRNSDS (264 aa)) folds into the Pyruvate carboxyltransferase domain. Residues Asp-17, His-208, His-210, and Asn-244 each contribute to the Mn(2+) site. Positions 408–546 (QLSLVQVSCG…DKTLLSNPGK (139 aa)) are regulatory domain.

Belongs to the alpha-IPM synthase/homocitrate synthase family. LeuA type 1 subfamily. In terms of assembly, homodimer. Requires Mn(2+) as cofactor.

It is found in the cytoplasm. It carries out the reaction 3-methyl-2-oxobutanoate + acetyl-CoA + H2O = (2S)-2-isopropylmalate + CoA + H(+). It participates in amino-acid biosynthesis; L-leucine biosynthesis; L-leucine from 3-methyl-2-oxobutanoate: step 1/4. Catalyzes the condensation of the acetyl group of acetyl-CoA with 3-methyl-2-oxobutanoate (2-ketoisovalerate) to form 3-carboxy-3-hydroxy-4-methylpentanoate (2-isopropylmalate). The protein is 2-isopropylmalate synthase of Prochlorococcus marinus (strain MIT 9215).